Consider the following 517-residue polypeptide: Synaptic vesicular amine transporter (517 aa).

The Cytoplasmic portion of the chain corresponds to 1–20 (MALSELALLRRLQESRHSRK). The chain crosses the membrane as a helical span at residues 21–41 (LILFIVFLALLLDNMLLTVVV). The Extracellular portion of the chain corresponds to 42–132 (PIIPSYLYSI…EDKDLLNENV (91 aa)). Residues N84, N91, and N112 are each glycosylated (N-linked (GlcNAc...) asparagine). A disulfide bridge connects residues C120 and C327. Residues 133 to 153 (QVGLLFASKATVQLLTNPFIG) form a helical membrane-spanning segment. Topologically, residues 154–162 (LLTNRIGYP) are cytoplasmic. The chain crosses the membrane as a helical span at residues 163-183 (IPMFTGFCIMFISTVMFAFSR). Residues 184–192 (TYAFLLIAR) are Extracellular-facing. A helical transmembrane segment spans residues 193 to 213 (SLQGIGSSCSSVAGMGMLASV). Over 214–222 (YTDDEERGN) the chain is Cytoplasmic. The helical transmembrane segment at 223-245 (AMGIALGGLAMGVLVGPPFGSVL) threads the bilayer. Serotonin contacts are provided by L231 and V235. Over 246–251 (YEFVGK) the chain is Extracellular. The chain crosses the membrane as a helical span at residues 252-274 (TAPFLVLAALVLLDGAIQLFVLQ). The Cytoplasmic portion of the chain corresponds to 275–294 (PSRVQPESQKGTPLTTLLRD). A helical membrane pass occupies residues 295–314 (PYILIAAGSICFANMGIAML). Residues N308, I311, E315, F337, and Y344 each coordinate serotonin. Residues 315 to 331 (EPALPIWMMETMCSHKW) lie on the Extracellular side of the membrane. The chain crosses the membrane as a helical span at residues 332–355 (QLGVAFLPASVSYLIGTNVFGILA). The Cytoplasmic portion of the chain corresponds to 356–360 (HKMGR). The chain crosses the membrane as a helical span at residues 361-381 (WLCALLGMIIVGMSILCIPLA). Residues 382–392 (KNIYGLIAPNF) are Extracellular-facing. The helical transmembrane segment at 393–413 (GVGFAIGMVDSSMMPIMGYLV) threads the bilayer. D402 contacts serotonin. The Cytoplasmic portion of the chain corresponds to 414 to 417 (DLRH). The chain crosses the membrane as a helical span at residues 418–438 (VSVYGSVYAIADVAFCMGYAI). Position 436 (Y436) interacts with serotonin. The Extracellular segment spans residues 439 to 443 (GPSAG). The helical transmembrane segment at 444 to 465 (GAIAKAIGFPWLMTIIGIIDIL) threads the bilayer. The Cytoplasmic segment spans residues 466–517 (FAPLCFFLRSPPAKEEKMAILMDHNCPIKTKMYTQNSSQSHPIGEDEESESD). Residues S514 and S516 each carry the phosphoserine; by CK2 modification.

Belongs to the major facilitator superfamily. Vesicular transporter family. In terms of assembly, interacts with SLC6A3.

It localises to the cytoplasmic vesicle. The protein resides in the secretory vesicle. It is found in the synaptic vesicle membrane. The protein localises to the secretory vesicle membrane. Its subcellular location is the cell projection. It localises to the axon. The protein resides in the dendrite. The enzyme catalyses serotonin(in) + 2 H(+)(out) = serotonin(out) + 2 H(+)(in). It carries out the reaction dopamine(in) + 2 H(+)(out) = dopamine(out) + 2 H(+)(in). It catalyses the reaction histamine(in) + 2 H(+)(out) = histamine(out) + 2 H(+)(in). Strongly inhibited by reserpine and tetrabenazine. Also inhibited to a lesser extent by ketanserin and fenfluramine. Reserpine and ketanserin inhibit by blocking the substrate-binding pocket. Tetrabenazine traps SLC18A2/VMAT2 in an occluded conformation and its inhibition is specific to SLC18A2/VMAT2 but not SLC18A1/VMAT1. Electrogenic antiporter that exchanges one cationic monoamine with two intravesicular protons across the membrane of secretory and synaptic vesicles. Uses the electrochemical proton gradient established by the V-type proton-pump ATPase to accumulate high concentrations of monoamines inside the vesicles prior to their release via exocytosis. Transports a variety of catecholamines such as dopamine, adrenaline and noradrenaline, histamine, and indolamines such as serotonin. Regulates the transvesicular monoaminergic gradient that determines the quantal size. Mediates somatodendritic dopamine release in hippocampal neurons, likely as part of a regulated secretory pathway that integrates retrograde synaptic signals. Acts as a primary transporter for striatal dopamine loading ensuring impulse-dependent release of dopamine at the synaptic cleft. Responsible for histamine and serotonin storage and subsequent corelease from mast cell granules. The polypeptide is Synaptic vesicular amine transporter (SLC18A2) (Bos taurus (Bovine)).